Consider the following 285-residue polypeptide: 3',5'-nucleoside bisphosphate phosphatase (285 aa).

6 residues coordinate Mn(2+): His-7, His-9, Asp-14, His-39, Glu-64, and His-75. Substrate contacts are provided by Asp-14 and His-39. Substrate contacts are provided by residues 99–102 and 134–135; these read RLER and RT. Positions 191, 248, and 250 each coordinate Mn(2+). His-250 serves as a coordination point for substrate.

This sequence belongs to the PHP family. In terms of assembly, monomer. The cofactor is Mn(2+).

The catalysed reaction is a ribonucleoside 3',5'-bisphosphate + H2O = a ribonucleoside 5'-phosphate + phosphate. In terms of biological role, hydrolyzes 3',5'-bisphosphonucleosides (pGp, pCp, pUp, and pIp) to nucleoside 5'-phosphate and orthophosphate. Has similar catalytic efficiencies with all the bases. Also shows activity with ribonucleoside 2'-deoxyribonucleoside 3',5'-bisphosphates. Does not show activity with nucleoside 2',5'-bisphosphates. This chain is 3',5'-nucleoside bisphosphate phosphatase, found in Chromobacterium violaceum (strain ATCC 12472 / DSM 30191 / JCM 1249 / CCUG 213 / NBRC 12614 / NCIMB 9131 / NCTC 9757 / MK).